Consider the following 447-residue polypeptide: Tryptophan 5-hydroxylase 1 (447 aa).

One can recognise an ACT domain in the interval 22 to 97 (TLIFSLENEV…TVLSVDSPDQ (76 aa)). Serine 61 carries the phosphoserine; by PKA modification. 3 residues coordinate L-tryptophan: tyrosine 238, arginine 260, and threonine 268. Fe cation contacts are provided by histidine 275, histidine 280, and glutamate 320. The L-tryptophan site is built by serine 339 and isoleucine 369.

Belongs to the biopterin-dependent aromatic amino acid hydroxylase family. As to quaternary structure, homotetramer. Interacts with DNAJC12. Fe(2+) is required as a cofactor. In terms of processing, ubiquitinated, leading to its degradation by the proteasome. Ubiquitinated is triggered by phosphorylation. Post-translationally, phosphorylated; triggering degradation by the proteasome.

The enzyme catalyses (6R)-L-erythro-5,6,7,8-tetrahydrobiopterin + L-tryptophan + O2 = 5-hydroxy-L-tryptophan + (4aS,6R)-4a-hydroxy-L-erythro-5,6,7,8-tetrahydrobiopterin. The protein operates within aromatic compound metabolism; serotonin biosynthesis; serotonin from L-tryptophan: step 1/2. Oxidizes L-tryptophan to 5-hydroxy-l-tryptophan in the rate-determining step of serotonin biosynthesis. The sequence is that of Tryptophan 5-hydroxylase 1 from Mus musculus (Mouse).